Reading from the N-terminus, the 793-residue chain is MGVWLNRDEFIRDVKRISLCLLVLYVVIVVGTDQNFYSLLGVSKTASSREIRQAFKKLALKLHPDKNPNNPNAHGDFLKINRAYEVLKDEDLRKKYDKYGEKGLEDNQGGQYESWSYYRYDFGIYDDDPEIITLERREFDAAVNSGELWFVNFYSPGCSHCHDLAPTWREFAKEVDGLLRIGAVNCGDDRMLCRMKGVNSYPSLFIFRSGMAAVKYNGDRSKESLVSFAMQHVRTTVTELSTGNFVNAIETAFAAGIGWLITFCFKGEDCLTPQTRLRLSGMLDGLVNVGWVDCDTQDSLCKSLDATASTTAYFPPGATLNNKEKSSVLFLNSLDAKEIYMEIIHNLPDFELLSANKLEDRLAHHRWLVFFHFGKNENANDPELKKLKTLLKNEHIQVGRFDCSSAPGICSDLYVFQSCLAVFKGQGTKEYEIHHGKKILYDILAFAKESVNSHVTTLGPQNFPASDKEPWLVDFFAPWCPPCRALLPELRKASTLLYGQLKVGTLDCTIHEGLCNMYNIQAYPTTVVFNQSSVHEYEGHHSAEQILEFIEDLRNPSVVSLTPTTFNELVKQRKHDEVWMVDFYSPWCHPCQVLMPEWKRMARTLTGLINVGSVDCQQYHSFCTQENVQRYPEIRFYPQKSSRAYQYHSYNGWNRDAYSLRSWGLGFLPQASIDLTPQTFNEKVLQGKTHWVIDFYAPWCGPCQNFAPEFELLARMIKGKVKAGKVDCQAYPQTCQKAGIRAYPSVKLYLYERAKKSIWEEQINSRDAKTIAALIYGKLETFQSQVKRNKDEL.

The first 32 residues, 1–32 (MGVWLNRDEFIRDVKRISLCLLVLYVVIVVGT), serve as a signal peptide directing secretion. The 66-residue stretch at 35 to 100 (NFYSLLGVSK…DLRKKYDKYG (66 aa)) folds into the J domain. The Thioredoxin 1 domain maps to 130 to 232 (EIITLERREF…ESLVSFAMQH (103 aa)). A disulfide bond links Cys-158 and Cys-161. 2 trxb regions span residues 235-350 (TTVT…LPDF) and 348-463 (PDFE…PQNF). Thioredoxin domains are found at residues 454–553 (HVTT…IEDL), 557–665 (SVVS…SWGL), and 671–776 (ASID…ALIY). A disulfide bond links Cys-480 and Cys-483. N-linked (GlcNAc...) asparagine glycosylation occurs at Asn-530. 2 cysteine pairs are disulfide-bonded: Cys-588/Cys-591 and Cys-700/Cys-703. The short motif at 790-793 (KDEL) is the Prevents secretion from ER element.

In terms of assembly, interacts with HSPA5 (via its J domain). Interacts with EDEM1.

Its subcellular location is the endoplasmic reticulum lumen. Its function is as follows. Endoplasmic reticulum disulfide reductase involved both in the correct folding of proteins and degradation of misfolded proteins. Required for efficient folding of proteins in the endoplasmic reticulum by catalyzing the removal of non-native disulfide bonds formed during the folding of proteins, such as LDLR. Also involved in endoplasmic reticulum-associated degradation (ERAD) by reducing incorrect disulfide bonds in misfolded glycoproteins recognized by EDEM1. Interaction with HSPA5 is required its activity, not for the disulfide reductase activity, but to facilitate the release of DNAJC10 from its substrate. Promotes apoptotic signaling pathway in response to endoplasmic reticulum stress. The protein is DnaJ homolog subfamily C member 10 (Dnajc10) of Rattus norvegicus (Rat).